The sequence spans 501 residues: L-arabinose isomerase (501 aa).

Positions 306, 333, 350, and 450 each coordinate Mn(2+).

Belongs to the arabinose isomerase family. In terms of assembly, homohexamer. Requires Mn(2+) as cofactor.

The enzyme catalyses beta-L-arabinopyranose = L-ribulose. It functions in the pathway carbohydrate degradation; L-arabinose degradation via L-ribulose; D-xylulose 5-phosphate from L-arabinose (bacterial route): step 1/3. Its function is as follows. Catalyzes the conversion of L-arabinose to L-ribulose. The protein is L-arabinose isomerase of Serratia proteamaculans (strain 568).